Consider the following 101-residue polypeptide: Small ribosomal subunit protein uS14 (101 aa).

The tract at residues 1–21 (MAKTSAVEKNKRRRKSVAQQA) is disordered.

This sequence belongs to the universal ribosomal protein uS14 family. Part of the 30S ribosomal subunit. Contacts proteins S3 and S10.

Functionally, binds 16S rRNA, required for the assembly of 30S particles and may also be responsible for determining the conformation of the 16S rRNA at the A site. This chain is Small ribosomal subunit protein uS14, found in Agrobacterium fabrum (strain C58 / ATCC 33970) (Agrobacterium tumefaciens (strain C58)).